Reading from the N-terminus, the 428-residue chain is Gamma-glutamyl phosphate reductase (428 aa).

The protein belongs to the gamma-glutamyl phosphate reductase family.

Its subcellular location is the cytoplasm. The catalysed reaction is L-glutamate 5-semialdehyde + phosphate + NADP(+) = L-glutamyl 5-phosphate + NADPH + H(+). The protein operates within amino-acid biosynthesis; L-proline biosynthesis; L-glutamate 5-semialdehyde from L-glutamate: step 2/2. Its function is as follows. Catalyzes the NADPH-dependent reduction of L-glutamate 5-phosphate into L-glutamate 5-semialdehyde and phosphate. The product spontaneously undergoes cyclization to form 1-pyrroline-5-carboxylate. This chain is Gamma-glutamyl phosphate reductase, found in Afipia carboxidovorans (strain ATCC 49405 / DSM 1227 / KCTC 32145 / OM5) (Oligotropha carboxidovorans).